We begin with the raw amino-acid sequence, 166 residues long: Ribosome maturation factor RimM (166 aa).

Residues 90 to 165 (NDNDAFSIFY…IITLKNIEGL (76 aa)) form the PRC barrel domain.

The protein belongs to the RimM family. As to quaternary structure, binds ribosomal protein uS19.

It is found in the cytoplasm. Its function is as follows. An accessory protein needed during the final step in the assembly of 30S ribosomal subunit, possibly for assembly of the head region. Essential for efficient processing of 16S rRNA. May be needed both before and after RbfA during the maturation of 16S rRNA. It has affinity for free ribosomal 30S subunits but not for 70S ribosomes. This is Ribosome maturation factor RimM from Mesoplasma florum (strain ATCC 33453 / NBRC 100688 / NCTC 11704 / L1) (Acholeplasma florum).